We begin with the raw amino-acid sequence, 389 residues long: Lipid-A-disaccharide synthase (389 aa).

This sequence belongs to the LpxB family.

It carries out the reaction a lipid X + a UDP-2-N,3-O-bis[(3R)-3-hydroxyacyl]-alpha-D-glucosamine = a lipid A disaccharide + UDP + H(+). It functions in the pathway bacterial outer membrane biogenesis; LPS lipid A biosynthesis. In terms of biological role, condensation of UDP-2,3-diacylglucosamine and 2,3-diacylglucosamine-1-phosphate to form lipid A disaccharide, a precursor of lipid A, a phosphorylated glycolipid that anchors the lipopolysaccharide to the outer membrane of the cell. This Verminephrobacter eiseniae (strain EF01-2) protein is Lipid-A-disaccharide synthase.